Consider the following 295-residue polypeptide: Autophagy-related protein 37 (295 aa).

The ACB domain maps to 5–103; sequence VDRVFVHALN…LIDTMHRYAT (99 aa). 2 disordered regions span residues 124-162 and 174-201; these read NSPS…PLKE and LRSQ…RWQR. The span at 125–153 shows a compositional bias: low complexity; sequence SPSSSLSSPRPNQSTGAGAQQPQQEPEQA. Asn-136 carries an N-linked (GlcNAc...) asparagine glycan. The chain crosses the membrane as a helical span at residues 244-264; the sequence is WLLVKHIFADLVILSVVLLWL.

Belongs to the ATG37 family.

The protein localises to the peroxisome membrane. Functionally, acyl-CoA binding protein which acts as the peroxisome receptor for pexophagy. Required for both micropexophagy and macropexophagy, but not for the cytoplasm to vacuole transport (Cvt) or autophagy pathways. Required for functional micropexophagic apparatus (MIPA) and relocation of ATG11 to the peroxisome-sequestering arms of the vacuole. Binds palmitoyl-CoA but not oleyl-CoA. This Gibberella zeae (strain ATCC MYA-4620 / CBS 123657 / FGSC 9075 / NRRL 31084 / PH-1) (Wheat head blight fungus) protein is Autophagy-related protein 37.